Here is a 59-residue protein sequence, read N- to C-terminus: Large ribosomal subunit protein uL30 (59 aa).

Belongs to the universal ribosomal protein uL30 family. In terms of assembly, part of the 50S ribosomal subunit.

The protein is Large ribosomal subunit protein uL30 of Haemophilus influenzae (strain 86-028NP).